A 608-amino-acid polypeptide reads, in one-letter code: Glutamine--fructose-6-phosphate aminotransferase [isomerizing] (608 aa).

Cys-2 acts as the Nucleophile; for GATase activity in catalysis. One can recognise a Glutamine amidotransferase type-2 domain in the interval 2–218 (CGICGIVGHQ…DGDWCELTPD (217 aa)). 2 consecutive SIS domains span residues 284–423 (MPFD…ARGT) and 456–598 (MAAV…VDQP). Lys-603 functions as the For Fru-6P isomerization activity in the catalytic mechanism.

Homodimer.

The protein resides in the cytoplasm. The enzyme catalyses D-fructose 6-phosphate + L-glutamine = D-glucosamine 6-phosphate + L-glutamate. In terms of biological role, catalyzes the first step in hexosamine metabolism, converting fructose-6P into glucosamine-6P using glutamine as a nitrogen source. This chain is Glutamine--fructose-6-phosphate aminotransferase [isomerizing], found in Gluconobacter oxydans (strain 621H) (Gluconobacter suboxydans).